We begin with the raw amino-acid sequence, 454 residues long: UDP-N-acetylmuramoyl-tripeptide--D-alanyl-D-alanine ligase (454 aa).

116 to 122 (GSVGKTT) contacts ATP.

The protein belongs to the MurCDEF family. MurF subfamily.

It is found in the cytoplasm. It catalyses the reaction D-alanyl-D-alanine + UDP-N-acetyl-alpha-D-muramoyl-L-alanyl-gamma-D-glutamyl-meso-2,6-diaminopimelate + ATP = UDP-N-acetyl-alpha-D-muramoyl-L-alanyl-gamma-D-glutamyl-meso-2,6-diaminopimeloyl-D-alanyl-D-alanine + ADP + phosphate + H(+). The protein operates within cell wall biogenesis; peptidoglycan biosynthesis. Involved in cell wall formation. Catalyzes the final step in the synthesis of UDP-N-acetylmuramoyl-pentapeptide, the precursor of murein. This is UDP-N-acetylmuramoyl-tripeptide--D-alanyl-D-alanine ligase from Synechocystis sp. (strain ATCC 27184 / PCC 6803 / Kazusa).